The chain runs to 347 residues: Selenide, water dikinase (347 aa).

Residue Cys17 is part of the active site. ATP-binding positions include Lys20 and 48 to 50; that span reads TRD. Asp51 serves as a coordination point for Mg(2+). ATP contacts are provided by residues Asp68, Asp91, and 139–141; that span reads GHS. Residue Asp91 coordinates Mg(2+). A Mg(2+)-binding site is contributed by Asp227.

This sequence belongs to the selenophosphate synthase 1 family. Class I subfamily. As to quaternary structure, homodimer. Mg(2+) is required as a cofactor.

The catalysed reaction is hydrogenselenide + ATP + H2O = selenophosphate + AMP + phosphate + 2 H(+). Its function is as follows. Synthesizes selenophosphate from selenide and ATP. In Enterobacter sp. (strain 638), this protein is Selenide, water dikinase.